The following is a 465-amino-acid chain: Ribulose bisphosphate carboxylase large chain (465 aa).

At lysine 4 the chain carries N6,N6,N6-trimethyllysine. Residues asparagine 113 and threonine 163 each coordinate substrate. Lysine 165 functions as the Proton acceptor in the catalytic mechanism. Lysine 167 provides a ligand contact to substrate. Mg(2+) contacts are provided by lysine 191, aspartate 193, and glutamate 194. Lysine 191 carries the N6-carboxylysine modification. Residue histidine 284 is the Proton acceptor of the active site. Substrate contacts are provided by arginine 285, histidine 317, and serine 369.

It belongs to the RuBisCO large chain family. Type I subfamily. Heterohexadecamer of 8 large chains and 8 small chains; disulfide-linked. The disulfide link is formed within the large subunit homodimers. Mg(2+) serves as cofactor. The disulfide bond which can form in the large chain dimeric partners within the hexadecamer appears to be associated with oxidative stress and protein turnover.

The protein resides in the plastid. Its subcellular location is the chloroplast. The catalysed reaction is 2 (2R)-3-phosphoglycerate + 2 H(+) = D-ribulose 1,5-bisphosphate + CO2 + H2O. It carries out the reaction D-ribulose 1,5-bisphosphate + O2 = 2-phosphoglycolate + (2R)-3-phosphoglycerate + 2 H(+). In terms of biological role, ruBisCO catalyzes two reactions: the carboxylation of D-ribulose 1,5-bisphosphate, the primary event in carbon dioxide fixation, as well as the oxidative fragmentation of the pentose substrate in the photorespiration process. Both reactions occur simultaneously and in competition at the same active site. The sequence is that of Ribulose bisphosphate carboxylase large chain from Hamamelis mollis (Chinese witch hazel).